We begin with the raw amino-acid sequence, 519 residues long: Pleckstrin homology domain-containing family A member 8 (519 aa).

One can recognise a PH domain in the interval 1 to 93 (MEGVLYKWTN…WLVALGSAKA (93 aa)). Position 139 is a phosphothreonine (T139). S145 is modified (phosphoserine). Residue T153 is modified to Phosphothreonine. Residues 310–519 (TFFSTMNTSF…VHGLESDEVV (210 aa)) form a glycolipid transfer protein homology domain region.

In terms of assembly, homodimer. Interacts with ARF1; the interaction together with phosphatidylinositol 4-phosphate binding is required for FAPP2 GlcCer transfer ability. In terms of tissue distribution, expressed in kidney cell lines.

The protein resides in the golgi apparatus. Its subcellular location is the trans-Golgi network membrane. It is found in the membrane. Functionally, cargo transport protein that is required for apical transport from the Golgi complex. Transports AQP2 from the trans-Golgi network (TGN) to sites of AQP2 phosphorylation. Mediates the non-vesicular transport of glucosylceramide (GlcCer) from the trans-Golgi network (TGN) to the plasma membrane and plays a pivotal role in the synthesis of complex glycosphingolipids. Binding of both phosphatidylinositol 4-phosphate (PIP) and ARF1 are essential for the GlcCer transfer ability. Also required for primary cilium formation, possibly by being involved in the transport of raft lipids to the apical membrane, and for membrane tubulation. The chain is Pleckstrin homology domain-containing family A member 8 (PLEKHA8) from Homo sapiens (Human).